The sequence spans 180 residues: Ribulose bisphosphate carboxylase small subunit, chloroplastic 2 (180 aa).

A chloroplast-targeting transit peptide spans 1-56 (MASSVLSSAAVATVSRTPAQASMVAPFTGLKSTVGFPATKKNDDITSLASNGGRVQ).

It belongs to the RuBisCO small chain family. In terms of assembly, heterohexadecamer of 8 large and 8 small subunits.

The protein resides in the plastid. It is found in the chloroplast. RuBisCO catalyzes two reactions: the carboxylation of D-ribulose 1,5-bisphosphate, the primary event in carbon dioxide fixation, as well as the oxidative fragmentation of the pentose substrate. Both reactions occur simultaneously and in competition at the same active site. Although the small subunit is not catalytic it is essential for maximal activity. This is Ribulose bisphosphate carboxylase small subunit, chloroplastic 2 from Spinacia oleracea (Spinach).